The sequence spans 128 residues: ATP synthase epsilon chain (128 aa).

The protein belongs to the ATPase epsilon chain family. F-type ATPases have 2 components, CF(1) - the catalytic core - and CF(0) - the membrane proton channel. CF(1) has five subunits: alpha(3), beta(3), gamma(1), delta(1), epsilon(1). CF(0) has three main subunits: a, b and c.

Its subcellular location is the cell inner membrane. Functionally, produces ATP from ADP in the presence of a proton gradient across the membrane. The chain is ATP synthase epsilon chain from Sulfurovum sp. (strain NBC37-1).